Here is a 407-residue protein sequence, read N- to C-terminus: NAD(P)H-quinone oxidoreductase subunit 1 (407 aa).

The next 9 membrane-spanning stretches (helical) occupy residues 28-48 (WLPL…IAAV), 96-116 (WLFT…YLVI), 127-147 (ITIG…GALM), 175-195 (LALS…VDIV), 203-223 (LFSF…IFLI), 267-287 (LILA…FIVP), 309-329 (ALVG…LAIL), 347-367 (WKFL…LVLL), and 374-394 (TLPL…AMSL).

It belongs to the complex I subunit 1 family. As to quaternary structure, NDH-1 is composed of at least 11 different subunits.

The protein resides in the cell inner membrane. The enzyme catalyses a plastoquinone + NADH + (n+1) H(+)(in) = a plastoquinol + NAD(+) + n H(+)(out). It catalyses the reaction a plastoquinone + NADPH + (n+1) H(+)(in) = a plastoquinol + NADP(+) + n H(+)(out). NDH-1 shuttles electrons from an unknown electron donor, via FMN and iron-sulfur (Fe-S) centers, to quinones in the respiratory and/or the photosynthetic chain. The immediate electron acceptor for the enzyme in this species is believed to be plastoquinone. Couples the redox reaction to proton translocation, and thus conserves the redox energy in a proton gradient. The chain is NAD(P)H-quinone oxidoreductase subunit 1 from Gloeobacter violaceus (strain ATCC 29082 / PCC 7421).